The primary structure comprises 167 residues: Small ribosomal subunit protein uS5 (167 aa).

Residues 12–75 (LQEKLIAVNR…EKARRNMTTI (64 aa)) form the S5 DRBM domain.

It belongs to the universal ribosomal protein uS5 family. As to quaternary structure, part of the 30S ribosomal subunit. Contacts proteins S4 and S8.

In terms of biological role, with S4 and S12 plays an important role in translational accuracy. Located at the back of the 30S subunit body where it stabilizes the conformation of the head with respect to the body. In Vibrio parahaemolyticus serotype O3:K6 (strain RIMD 2210633), this protein is Small ribosomal subunit protein uS5.